Reading from the N-terminus, the 123-residue chain is Small ribosomal subunit protein uS13 (123 aa).

The segment at 97–123 (PVRGQRTRSNARTRKGPRPSRIKKKGK) is disordered. Basic residues predominate over residues 101–123 (QRTRSNARTRKGPRPSRIKKKGK).

This sequence belongs to the universal ribosomal protein uS13 family. In terms of assembly, part of the 30S ribosomal subunit. Forms a loose heterodimer with protein S19. Forms two bridges to the 50S subunit in the 70S ribosome.

Functionally, located at the top of the head of the 30S subunit, it contacts several helices of the 16S rRNA. In the 70S ribosome it contacts the 23S rRNA (bridge B1a) and protein L5 of the 50S subunit (bridge B1b), connecting the 2 subunits; these bridges are implicated in subunit movement. Contacts the tRNAs in the A and P-sites. The polypeptide is Small ribosomal subunit protein uS13 (Fervidobacterium nodosum (strain ATCC 35602 / DSM 5306 / Rt17-B1)).